The chain runs to 638 residues: Threonine--tRNA ligase (638 aa).

In terms of domain architecture, TGS spans 1-61 (MPNIKLPDGS…ERDSELAILT (61 aa)). A catalytic region spans residues 242–533 (DHRKLGRQLD…LIEHYAGAMP (292 aa)). Zn(2+) is bound by residues Cys333, His384, and His510.

It belongs to the class-II aminoacyl-tRNA synthetase family. As to quaternary structure, homodimer. Zn(2+) serves as cofactor.

The protein localises to the cytoplasm. The enzyme catalyses tRNA(Thr) + L-threonine + ATP = L-threonyl-tRNA(Thr) + AMP + diphosphate + H(+). In terms of biological role, catalyzes the attachment of threonine to tRNA(Thr) in a two-step reaction: L-threonine is first activated by ATP to form Thr-AMP and then transferred to the acceptor end of tRNA(Thr). Also edits incorrectly charged L-seryl-tRNA(Thr). This chain is Threonine--tRNA ligase, found in Azoarcus sp. (strain BH72).